We begin with the raw amino-acid sequence, 187 residues long: Small ribosomal subunit protein uS4 (187 aa).

One can recognise an S4 RNA-binding domain in the interval arginine 105–valine 174.

The protein belongs to the universal ribosomal protein uS4 family. In terms of assembly, part of the 30S ribosomal subunit. Contacts protein S5. The interaction surface between S4 and S5 is involved in control of translational fidelity.

Its function is as follows. One of the primary rRNA binding proteins, it binds directly to 16S rRNA where it nucleates assembly of the body of the 30S subunit. Functionally, with S5 and S12 plays an important role in translational accuracy. The chain is Small ribosomal subunit protein uS4 from Methanocaldococcus jannaschii (strain ATCC 43067 / DSM 2661 / JAL-1 / JCM 10045 / NBRC 100440) (Methanococcus jannaschii).